Consider the following 690-residue polypeptide: NF-kappa-B-repressing factor (690 aa).

Positions 1–296 (MEKILHMAEG…FKHIIGEDLV (296 aa)) are active repression domain. Positions 25–45 (KPSKGQKRYLSTYDGQNPPKK) match the Nuclear localization signal motif. Disordered regions lie at residues 27-49 (SKGQKRYLSTYDGQNPPKKQAGS), 65-85 (SSSKAERQEDPYGPQTKDVNG), and 133-160 (YFDSGNPAPSSTSQQANCQPAPEPPPSQ). Lys-68 participates in a covalent cross-link: Glycyl lysine isopeptide (Lys-Gly) (interchain with G-Cter in SUMO2). Over residues 139-150 (PAPSSTSQQANC) the composition is skewed to polar residues. A DNA-binding region spans residues 296–388 (VVCQIGMLSY…RVFLQDHCLA (93 aa)). The span at 414-425 (PTYPSVKSSQCH) shows a compositional bias: polar residues. Residues 414–436 (PTYPSVKSSQCHSGSSPKGSGKK) are disordered. Lys-500 is covalently cross-linked (Glycyl lysine isopeptide (Lys-Gly) (interchain with G-Cter in SUMO2)). The G-patch domain occupies 551 to 596 (EDNIGNQLLRKMGWTGGGLGKSGEGIREPISVKEQHKREGLGLDVE). The R3H domain maps to 600 to 664 (KIAKRDIEQI…DRYLVVGRKR (65 aa)). Ser-618 bears the Phosphoserine mark. Glycyl lysine isopeptide (Lys-Gly) (interchain with G-Cter in SUMO2) cross-links involve residues Lys-666 and Lys-674.

As to quaternary structure, interacts with NF-kappa-B. Interacts with XRN2. Interacts (via G-patch domain) with DHX15; promoting the RNA helicase activity of DHX15.

Its subcellular location is the nucleus. The protein resides in the nucleolus. In terms of biological role, enhances the ATPase activity of DHX15 by acting like a brace that tethers mobile sections of DHX15 together, stabilizing a functional conformation with high RNA affinity of DHX15. Involved in the constitutive silencing of the interferon beta promoter, independently of the virus-induced signals, and in the inhibition of the basal and cytokine-induced iNOS promoter activity. Also involved in the regulation of IL-8 transcription. May also act as a DNA-binding transcription regulator: interacts with a specific negative regulatory element (NRE) 5'-AATTCCTCTGA-3' to mediate transcriptional repression of certain NK-kappa-B responsive genes. This is NF-kappa-B-repressing factor (Nkrf) from Mus musculus (Mouse).